Here is a 164-residue protein sequence, read N- to C-terminus: Cyanate hydratase (164 aa).

Residues R104, E107, and S130 contribute to the active site.

The protein belongs to the cyanase family.

It catalyses the reaction cyanate + hydrogencarbonate + 3 H(+) = NH4(+) + 2 CO2. Catalyzes the reaction of cyanate with bicarbonate to produce ammonia and carbon dioxide. The protein is Cyanate hydratase of Botryotinia fuckeliana (strain B05.10) (Noble rot fungus).